The following is a 528-amino-acid chain: Glucans biosynthesis protein G 2 (528 aa).

The first 44 residues, Met1–Gly44, serve as a signal peptide directing secretion.

The protein belongs to the OpgD/OpgG family.

It localises to the periplasm. The protein operates within glycan metabolism; osmoregulated periplasmic glucan (OPG) biosynthesis. Functionally, involved in the biosynthesis of osmoregulated periplasmic glucans (OPGs). This Shewanella oneidensis (strain ATCC 700550 / JCM 31522 / CIP 106686 / LMG 19005 / NCIMB 14063 / MR-1) protein is Glucans biosynthesis protein G 2 (opgG2).